A 596-amino-acid polypeptide reads, in one-letter code: Structural protein precursor VP8 (596 aa).

The protein resides in the virion. Its function is as follows. 120 subunits of the putative clamp protein VP8b appear to stabilize the capsid shell. This is Structural protein precursor VP8 from Oryza latifolia (Indian wild rice).